The following is a 346-amino-acid chain: Secreted frizzled-related protein 4 (346 aa).

The N-terminal stretch at 1–18 (MFLSILVALCLWLHLALG) is a signal peptide. Residues 19–139 (VRGAPCEAVR…VYDRGVCISP (121 aa)) enclose the FZ domain. Intrachain disulfides connect Cys-24–Cys-85, Cys-32–Cys-78, Cys-69–Cys-108, Cys-97–Cys-136, and Cys-101–Cys-125. 2 N-linked (GlcNAc...) asparagine glycosylation sites follow: Asn-38 and Asn-68. 3 N-linked (GlcNAc...) asparagine glycosylation sites follow: Asn-116, Asn-194, and Asn-240. Residues 178–307 (CKCKKVKPTL…IQDKKKTAGR (130 aa)) enclose the NTR domain. Over residues 294–303 (QRRTIQDKKK) the composition is skewed to basic and acidic residues. Residues 294–346 (QRRTIQDKKKTAGRTSRSNPPKPKGKPPAPKPASPKKNIKTRSAQKKTNPKKV) form a disordered region. A compositionally biased stretch (pro residues) spans 313 to 326 (PPKPKGKPPAPKPA). Basic residues predominate over residues 330 to 346 (KNIKTRSAQKKTNPKKV).

It belongs to the secreted frizzled-related protein (sFRP) family.

The protein resides in the secreted. Functionally, soluble frizzled-related proteins (sFRPS) function as modulators of Wnt signaling through direct interaction with Wnts. They have a role in regulating cell growth and differentiation in specific cell types. SFRP4 plays a role in bone morphogenesis. May also act as a regulator of adult uterine morphology and function. May also increase apoptosis during ovulation possibly through modulation of FZ1/FZ4/WNT4 signaling. Has phosphaturic effects by specifically inhibiting sodium-dependent phosphate uptake. The chain is Secreted frizzled-related protein 4 (SFRP4) from Macaca mulatta (Rhesus macaque).